We begin with the raw amino-acid sequence, 115 residues long: Transcriptional regulator protein FixT (115 aa).

In terms of assembly, interacts directly with FixL.

Its function is as follows. Prevents transcription of the intermediate key regulatory genes nifA and fixK by counteracting the activity of the FixLJ two-component system. Acts as an inhibitor of the sensor hemoprotein kinase fixL, preventing the production or the accumulation of its phosphorylated form. This is Transcriptional regulator protein FixT (fixT) from Rhizobium meliloti (strain 1021) (Ensifer meliloti).